We begin with the raw amino-acid sequence, 302 residues long: Putative peptide permease protein BRA0407/BS1330_II0404 (302 aa).

Positions 1-22 (MRSSIHASRLRKMGQSIPASTG) are disordered. 6 helical membrane-spanning segments follow: residues 38 to 58 (IFGL…PLWL), 101 to 121 (LLVA…IGAI), 147 to 167 (IFLL…VVVI), 200 to 222 (AGLG…VVYA), 230 to 250 (ILLE…AASW), and 268 to 288 (WQWL…NFIG). The ABC transmembrane type-1 domain occupies 97–288 (GRISLLVAVS…LAVLAINFIG (192 aa)).

It belongs to the binding-protein-dependent transport system permease family. The complex is composed of two ATP-binding proteins (BRA0404 and BRA0405), two transmembrane proteins (BRA0407 and BRA0408) and a solute-binding protein (BRA0409).

It is found in the cell inner membrane. In terms of biological role, probably part of an ABC transporter complex that could be involved in peptide import. Probably responsible for the translocation of the substrate across the membrane. This is Putative peptide permease protein BRA0407/BS1330_II0404 from Brucella suis biovar 1 (strain 1330).